The primary structure comprises 38 residues: Large ribosomal subunit protein bL36 (38 aa).

Belongs to the bacterial ribosomal protein bL36 family.

The sequence is that of Large ribosomal subunit protein bL36 from Aster yellows witches'-broom phytoplasma (strain AYWB).